Consider the following 92-residue polypeptide: Probable K(+)/H(+) antiporter subunit F (92 aa).

The next 3 membrane-spanning stretches (helical) occupy residues 4-24 (AVVW…AFAL), 36-56 (RILG…TFGI), and 62-82 (VYFE…IALA).

The protein belongs to the CPA3 antiporters (TC 2.A.63) subunit F family. May form a hetero-oligomeric complex that consists of six subunits: PhaAB, PhaC, PhaD, PhaE, PhaF and PhaG.

The protein resides in the cell membrane. In terms of biological role, part of a K(+) efflux system which is required for the adaptation of R.meliloti to alkaline pH as well as for the infection process during symbiotic nodule development. This Rhizobium meliloti (strain 1021) (Ensifer meliloti) protein is Probable K(+)/H(+) antiporter subunit F (phaF).